The primary structure comprises 232 residues: 5'-methylthioadenosine/S-adenosylhomocysteine nucleosidase (232 aa).

Glu-14 serves as the catalytic Proton acceptor. Residues Gly-80, Val-154, and 175-176 (ME) each bind substrate. Residue Asp-199 is the Proton donor of the active site.

The protein belongs to the PNP/UDP phosphorylase family. MtnN subfamily.

The enzyme catalyses S-adenosyl-L-homocysteine + H2O = S-(5-deoxy-D-ribos-5-yl)-L-homocysteine + adenine. It carries out the reaction S-methyl-5'-thioadenosine + H2O = 5-(methylsulfanyl)-D-ribose + adenine. It catalyses the reaction 5'-deoxyadenosine + H2O = 5-deoxy-D-ribose + adenine. It participates in amino-acid biosynthesis; L-methionine biosynthesis via salvage pathway; S-methyl-5-thio-alpha-D-ribose 1-phosphate from S-methyl-5'-thioadenosine (hydrolase route): step 1/2. In terms of biological role, catalyzes the irreversible cleavage of the glycosidic bond in both 5'-methylthioadenosine (MTA) and S-adenosylhomocysteine (SAH/AdoHcy) to adenine and the corresponding thioribose, 5'-methylthioribose and S-ribosylhomocysteine, respectively. Also cleaves 5'-deoxyadenosine, a toxic by-product of radical S-adenosylmethionine (SAM) enzymes, into 5-deoxyribose and adenine. This Actinobacillus pleuropneumoniae serotype 5b (strain L20) protein is 5'-methylthioadenosine/S-adenosylhomocysteine nucleosidase.